We begin with the raw amino-acid sequence, 465 residues long: Clusterin-like protein 1 (465 aa).

An N-terminal signal peptide occupies residues 1 to 20 (MKPSLLVFTVYLLWLKDCHC). A coiled-coil region spans residues 62 to 106 (MMERREEEHTNLMKTLKKCKEEKQEALKLMNEVQEHLEEEESLCQ). Intrachain disulfides connect Cys105–Cys333, Cys116–Cys325, Cys119–Cys322, and Cys124–Cys315. N-linked (GlcNAc...) asparagine glycans are attached at residues Asn196, Asn257, Asn285, Asn311, Asn351, Asn412, and Asn430.

The protein belongs to the clusterin family. In terms of tissue distribution, retina-specific (at protein level). In the light-adapted retina, expressed in the outer segment of cone photoreceptors. In the dark-adapted retina, strongly expressed in the outer plexiform layer in the region of contact between the cone pedicles and second order neurons with little or no expression in the cone photoreceptor outer segments.

It localises to the secreted. This is Clusterin-like protein 1 (CLUL1) from Canis lupus familiaris (Dog).